The following is a 301-amino-acid chain: Acetylglutamate kinase (301 aa).

Substrate-binding positions include 64–65, R86, and N181; that span reads GG.

The protein belongs to the acetylglutamate kinase family. ArgB subfamily.

It is found in the cytoplasm. It carries out the reaction N-acetyl-L-glutamate + ATP = N-acetyl-L-glutamyl 5-phosphate + ADP. The protein operates within amino-acid biosynthesis; L-arginine biosynthesis; N(2)-acetyl-L-ornithine from L-glutamate: step 2/4. In terms of biological role, catalyzes the ATP-dependent phosphorylation of N-acetyl-L-glutamate. The sequence is that of Acetylglutamate kinase from Aliarcobacter butzleri (strain RM4018) (Arcobacter butzleri).